A 407-amino-acid polypeptide reads, in one-letter code: Arginine deiminase (407 aa).

The active-site Amidino-cysteine intermediate is Cys-397.

Belongs to the arginine deiminase family.

The protein localises to the cytoplasm. The catalysed reaction is L-arginine + H2O = L-citrulline + NH4(+). Its pathway is amino-acid degradation; L-arginine degradation via ADI pathway; carbamoyl phosphate from L-arginine: step 1/2. In Listeria welshimeri serovar 6b (strain ATCC 35897 / DSM 20650 / CCUG 15529 / CIP 8149 / NCTC 11857 / SLCC 5334 / V8), this protein is Arginine deiminase.